The chain runs to 447 residues: Kynurenine 3-monooxygenase (447 aa).

This sequence belongs to the aromatic-ring hydroxylase family. KMO subfamily. FAD is required as a cofactor.

The enzyme catalyses L-kynurenine + NADPH + O2 + H(+) = 3-hydroxy-L-kynurenine + NADP(+) + H2O. It participates in cofactor biosynthesis; NAD(+) biosynthesis; quinolinate from L-kynurenine: step 1/3. Functionally, catalyzes the hydroxylation of L-kynurenine (L-Kyn) to form 3-hydroxy-L-kynurenine (L-3OHKyn). Required for synthesis of quinolinic acid. The sequence is that of Kynurenine 3-monooxygenase from Flavobacterium psychrophilum (strain ATCC 49511 / DSM 21280 / CIP 103535 / JIP02/86).